The primary structure comprises 630 residues: E3 ubiquitin-protein ligase TRIM41 (630 aa).

The RING-type; degenerate zinc finger occupies 20 to 61 (CAICLDYFTDPVSIGCGHNFCRVCVTQLWGGEDEEDRDELDR). The span at 51-75 (EDEEDRDELDREEEEEEVGEEEEVE) shows a compositional bias: acidic residues. 2 disordered regions span residues 51–97 (EDEE…GDME) and 148–176 (EDED…PPPA). Thr85 is modified (phosphothreonine). Residues 148–166 (EDEDEEEEVLEEDEEEELD) show a composition bias toward acidic residues. Residues 222-263 (NEQGICPRHQEALKLFCEVDEEAICVVCRESRSHKQHSVVPL) form a B box-type zinc finger. Positions 227, 230, 249, and 255 each coordinate Zn(2+). A Glycyl lysine isopeptide (Lys-Gly) (interchain with G-Cter in SUMO2) cross-link involves residue Lys256. Residues 281 to 374 (LRKHLEAVQK…AEAQERSQQG (94 aa)) are a coiled coil. In terms of domain architecture, B30.2/SPRY spans 413–630 (LTDAIVRKMS…SKGTRIKLCP (218 aa)). A Phosphoserine modification is found at Ser447. Positions 503-535 (ARESTHHKEKVGSGGSSVSSGDASSSRHHHRRR) are disordered.

Belongs to the TRIM/RBCC family. As to quaternary structure, interacts with PRKCA. Interacts with NOD2. Interacts with TRIM17; this interaction prevents TRIM41 activity on ZSCAN2. Post-translationally, auto-ubiquitinated.

It is found in the cytoplasm. Its subcellular location is the nucleus. The catalysed reaction is S-ubiquitinyl-[E2 ubiquitin-conjugating enzyme]-L-cysteine + [acceptor protein]-L-lysine = [E2 ubiquitin-conjugating enzyme]-L-cysteine + N(6)-ubiquitinyl-[acceptor protein]-L-lysine.. It functions in the pathway protein modification; protein ubiquitination. E3 ligase that plays essential roles in innate antiviral response. Directly binds to influenza A virus or vesicular stomatitis virus nucleoproteins and targets them for ubiquitination and proteasomal degradation, thereby limiting viral infections. Activates the innate antiviral response by catalyzing monoubiquitination of CGAS, thereby activating CGAS. Also involved in innate antiviral response by mediating 'Lys-63'-linked polyubiquitylation of BCL10 which in turn hubs NEMO for activation of NF-kappa-B and IRF3 pathways. Catalyzes the ubiquitin-mediated degradation of other substrates including protein kinase C, ZSCAN21 or TOP3B suggesting additional roles besides its function in immune response. This is E3 ubiquitin-protein ligase TRIM41 from Mus musculus (Mouse).